Reading from the N-terminus, the 94-residue chain is Large ribosomal subunit protein bL25 (94 aa).

This sequence belongs to the bacterial ribosomal protein bL25 family. Part of the 50S ribosomal subunit; part of the 5S rRNA/L5/L18/L25 subcomplex. Contacts the 5S rRNA. Binds to the 5S rRNA independently of L5 and L18.

Functionally, this is one of the proteins that binds to the 5S RNA in the ribosome where it forms part of the central protuberance. This is Large ribosomal subunit protein bL25 from Cronobacter sakazakii (strain ATCC BAA-894) (Enterobacter sakazakii).